Consider the following 276-residue polypeptide: Small ribosomal subunit protein uS2 (276 aa).

Belongs to the universal ribosomal protein uS2 family.

The polypeptide is Small ribosomal subunit protein uS2 (Chlamydia caviae (strain ATCC VR-813 / DSM 19441 / 03DC25 / GPIC) (Chlamydophila caviae)).